A 388-amino-acid polypeptide reads, in one-letter code: MNLHEYQAKELLAGYGLPVQGGILARNGEEAAAAYDKLGGKFAVVKAQVHAGGRGKAGGVKVVKSREEAKEVAESLIGTNLVTYQTDANGQPVNSVLVCEDMYPVQTELYLGAVVDRSTRRITFMASTEGGVEIEKVAAETPEKIFKVTVDPLVGLQPCQAREVAFQLGLKDKQINEFVKLMTGAYKAFVDNDFALFEVNPLAVRENGALACVDGKIGIDSNALYRLPKIAELRDKSQENERELKASEFDLNYVALEGNIGCMVNGAGLAMATMDIIKLKGGQPANFLDVGGGATKDRVVEAFKLILEDKSVKGVLINIFGGIVRCDMIAEAIVAAVKEINVNVPVVVRLEGNNAELGAKILNESGLKLTSADGLNDAAEKIVAAVNA.

The ATP-grasp domain maps to 9–245 (KELLAGYGLP…KSQENERELK (237 aa)). ATP contacts are provided by residues Lys-46, 53 to 55 (GRG), Glu-100, Tyr-103, and Glu-108. Mg(2+) is bound by residues Asn-200 and Asp-214. Substrate-binding positions include Asn-265 and 322–324 (GIV).

This sequence belongs to the succinate/malate CoA ligase beta subunit family. In terms of assembly, heterotetramer of two alpha and two beta subunits. It depends on Mg(2+) as a cofactor.

It catalyses the reaction succinate + ATP + CoA = succinyl-CoA + ADP + phosphate. The catalysed reaction is GTP + succinate + CoA = succinyl-CoA + GDP + phosphate. It participates in carbohydrate metabolism; tricarboxylic acid cycle; succinate from succinyl-CoA (ligase route): step 1/1. In terms of biological role, succinyl-CoA synthetase functions in the citric acid cycle (TCA), coupling the hydrolysis of succinyl-CoA to the synthesis of either ATP or GTP and thus represents the only step of substrate-level phosphorylation in the TCA. The beta subunit provides nucleotide specificity of the enzyme and binds the substrate succinate, while the binding sites for coenzyme A and phosphate are found in the alpha subunit. The protein is Succinate--CoA ligase [ADP-forming] subunit beta of Neisseria meningitidis serogroup C (strain 053442).